The sequence spans 244 residues: Small ribosomal subunit protein eS4 (244 aa).

The region spanning 37–123 is the S4 RNA-binding domain; it reads VPLAILLKYY…AKYKFVRIMN (87 aa).

This sequence belongs to the eukaryotic ribosomal protein eS4 family.

The chain is Small ribosomal subunit protein eS4 (rps4e) from Sulfolobus acidocaldarius (strain ATCC 33909 / DSM 639 / JCM 8929 / NBRC 15157 / NCIMB 11770).